The following is a 131-amino-acid chain: Calvin cycle protein CP12-2, chloroplastic (131 aa).

Residues 1 to 53 (MATIATGLNIATQRVFVTSENRPVCLAGPVHLNNSWNLGSRTTNRMMKLQPIK) constitute a chloroplast transit peptide. 2 disulfide bridges follow: Cys-75–Cys-84 and Cys-117–Cys-126. The interval 97-131 (AASHARDKKKADGSDPLEEYCKDNPETNECRTYDN) is disordered. Residues 105 to 131 (KKADGSDPLEEYCKDNPETNECRTYDN) show a composition bias toward basic and acidic residues.

The protein belongs to the CP12 family. In terms of assembly, monomer. Component of a complex that contains two dimers of PRK, two tetramers of GAPDH and CP12. CP12 associates with GAPDH, causing its conformation to change. This GAPDH/CP12 complex binds PRK to form a half-complex (one unit). This unit probably dimerizes due partially to interactions between the enzymes of each unit. In terms of processing, contains two disulfide bonds; only the oxidized protein, with two disulfide bonds, is active in complex formation. The C-terminal disulfide is involved in the interaction with GAPDH and the N-terminal disulfide mediates the binding of PRK with this binary complex. In terms of tissue distribution, mostly expressed in cotyledons, leaves and flower stalks, and, to a lower extent, in flowers and stems. Barely detectable in roots and siliques.

The protein localises to the plastid. It localises to the chloroplast. Functionally, acts as a linker essential in the assembly of a core complex of PRK/GAPDH. Coordinates the reversible inactivation of chloroplast enzymes GAPDH and PRK during darkness in photosynthetic tissues. In Arabidopsis thaliana (Mouse-ear cress), this protein is Calvin cycle protein CP12-2, chloroplastic (CP12-2).